A 506-amino-acid chain; its full sequence is 5'-3' exonuclease PLD4 (506 aa).

A helical membrane pass occupies residues 31 to 51; that stretch reads LQVLGALAVLWLGSVALICLL. Cys-94 and Cys-250 are disulfide-bonded. N-linked (GlcNAc...) asparagine glycosylation is found at Asn-150 and Asn-171. Residues 209-236 form the PLD phosphodiesterase 1 domain; the sequence is TRGVLHSKFWVVDGRHIYMGSANMDWRS. His-214 functions as the Proton donor in the catalytic mechanism. Residues Lys-216 and Asp-221 contribute to the active site. 5 N-linked (GlcNAc...) asparagine glycosylation sites follow: Asn-249, Asn-281, Asn-403, Asn-417, and Asn-427. Cys-379 and Cys-502 are disulfide-bonded. In terms of domain architecture, PLD phosphodiesterase 2 spans 423–449; that stretch reads FSRVNHSKFMVTEKAAYIGTSNWSEDY. The Nucleophile role is filled by His-428. Asn-444 is a glycosylation site (N-linked (GlcNAc...) asparagine).

It belongs to the phospholipase D family. As to quaternary structure, homodimer. In terms of processing, highly N-glycosylated. As to expression, expressed in plasmacytoid dendritic cells and monocytes (at protein level).

Its subcellular location is the endoplasmic reticulum membrane. The protein localises to the golgi apparatus. It is found in the trans-Golgi network membrane. It localises to the nucleus. The protein resides in the early endosome. Its subcellular location is the cytoplasmic vesicle. The protein localises to the phagosome. It is found in the lysosome. The enzyme catalyses Exonucleolytic cleavage in the 5'- to 3'-direction to yield nucleoside 3'-phosphates.. It catalyses the reaction a 5'-end 5'-dephospho-ribonucleotidyl-ribonucleotide-RNA + H2O = a ribonucleoside 3'-phosphate + a 5'-end dephospho-ribonucleoside-RNA + H(+). The catalysed reaction is a ribonucleoside 3'-phosphate-2'-3'-cyclophospho-GMP + H2O = a ribonucleoside 3'-phosphate + 2',3'-cyclophospho-GMP + H(+). It carries out the reaction a 5'-end 5'-dephospho-2'-deoxyribonucleotidyl-2'-deoxyribonucleotide in single-stranded DNA + H2O = a 5'-end dephospho-2'-deoxyribonucleoside in single-stranded DNA + a 2'-deoxyribonucleoside 3'-phosphate + H(+). The enzyme catalyses a 5'-end 5'-phospho-2'-deoxyribonucleotide in single-stranded DNA + H2O = a 5'-end 5'-dephospho-2'-deoxyribonucleotide in single-stranded DNA + phosphate. It catalyses the reaction a 3-lyso-sn-glycero-1-phospho-(3'-acyl-1'-sn-glycerol) + a 1-acyl-sn-glycerol = a 3-acyl-sn-glycero-1-phospho-(3'-acyl-1'-sn-glycerol) + glycerol. The catalysed reaction is 3-lyso-sn-glycero-1-phospho-(3'-(9Z-octadecenoyl)-1'-sn-glycerol) + 1-(9Z-octadecenoyl)-sn-glycerol = 3-(9Z-octadecenoyl)-sn-glycero-1-phospho-(3'-(9Z-octadecenoyl)-1'-sn-glycerol) + glycerol. The exonuclease activity toward ssDNA substrate is Ca(2+) and Mg(2+)-independent, but it is inhibited by Fe(2+), Cu(2+) and to a lesser extent Zn(2+) ions. In terms of biological role, 5'-&gt;3' exonuclease that hydrolyzes the phosphodiester bond of single-stranded DNA (ssDNA) and RNA molecules to form nucleoside 3'-monophosphates and 5'-end 5'-hydroxy deoxyribonucleotide/ribonucleotide fragments. Partially redundant with PLD3, can cleave all four nucleotides displaying higher efficiency for ssDNA and RNA fragments initiated with uridine and guanosine residues and lower efficiency for cytidine-initiated substrates. As a result, it does not always degrade polynucleotides to the single nucleotide level, it can stall at specific sites sparing certain fragments from exonucleolytic degradation. Processes self and pathogenic ssDNA and RNA molecules that reach the endolysosomal compartment via phagocytosis or autophagy and may serve as 'danger' signals for recognition by innate immune receptors such as toll-like receptors (TLRs). Degrades mitochondrial CpG-rich ssDNA fragments to prevent TLR9 activation and autoinflammatory response, but it can cleave viral RNA to generate ligands for TLR7 activation and initiate antiviral immune responses. In plasmacytoid dendritic cells, it cooperates with endonuclease RNASET2 to release 2',3'-cyclic guanosine monophosphate (2',3'-cGMP), a potent stimulatory ligand for TLR7. Produces 2',3'-cGMPs and cytidine-rich RNA fragments that occupy TLR7 ligand-binding pockets and trigger a signaling-competent state. Can exert polynucleotide phosphatase activity toward 5'-phosphorylated ssDNA substrates although at a slow rate. Transphosphatidylase that catalyzes the exchange with R to S stereo-inversion of the glycerol moiety between (S,R)-lysophosphatidylglycerol (LPG) and monoacylglycerol (MAG) substrates to yield (S,S)-bis(monoacylglycero)phosphate (BMP). Can synthesize a variety of (S,S)-BMPs representing the main phospholipid constituent of lysosomal intralumenal vesicle (ILV) membranes that bind acid hydrolases for lipid degradation. Regulates the homeostasis and interorganellar communication of the endolysosomal system with an overall impact on cellular removal of dysfunctional organelles via autophagy as well as proper protein and lipid turnover. May play a role in myotube formation in response to ER stress. The polypeptide is 5'-3' exonuclease PLD4 (Homo sapiens (Human)).